Here is a 549-residue protein sequence, read N- to C-terminus: Tight junction-associated protein 1 (549 aa).

Residues 1–34 (MSSAAPAKKPYRKAPPEHRELRLEIPVSRLEQEE) are disordered. A compositionally biased stretch (basic and acidic residues) spans 14–23 (APPEHRELRL). Residues 42–171 (MKLLQQENEE…EELNERYRLD (130 aa)) adopt a coiled-coil conformation. Disordered regions lie at residues 207 to 226 (RSGQ…LSPG) and 266 to 322 (VDMS…PLYP). Ser-295 bears the Phosphoserine mark. Pro residues predominate over residues 311–320 (YPTPSPPHPL). Thr-313 is modified (phosphothreonine). Phosphoserine is present on residues Ser-315 and Ser-340. Disordered stretches follow at residues 359–404 (EDGS…SEED), 410–429 (QRAF…RTAF), and 434–549 (LPEL…TVLS). Polar residues predominate over residues 369–383 (SVPSSPASAQGSPHH). The segment covering 389–400 (PSALSAPASSAS) has biased composition (low complexity). Thr-417 is subject to Phosphothreonine. Ser-483 bears the Phosphoserine mark. A compositionally biased stretch (basic and acidic residues) spans 485–498 (EEERQSLLPDKEGT). Over residues 522 to 534 (RSPKRMGVHHLHR) the composition is skewed to basic residues. Residue Ser-537 is modified to Phosphoserine. The segment covering 538 to 549 (LTQAQEQGTVLS) has biased composition (polar residues).

As to quaternary structure, interacts with DLG1. Interacts with ARF6 (GTP-bound form). Widely expressed including in adult thymus, heart, lung, liver, small intestine, kidney, spleen, testis and skeletal muscle and in embryonic brain but not detected in adult brain (at protein level).

The protein resides in the golgi apparatus. The protein localises to the trans-Golgi network. It localises to the cell junction. It is found in the tight junction. Its subcellular location is the cell membrane. In terms of biological role, plays a role in regulating the structure of the Golgi apparatus. The protein is Tight junction-associated protein 1 of Mus musculus (Mouse).